The following is a 556-amino-acid chain: Formate--tetrahydrofolate ligase (556 aa).

Residue 65-72 (TPAGEGKS) participates in ATP binding.

This sequence belongs to the formate--tetrahydrofolate ligase family.

It catalyses the reaction (6S)-5,6,7,8-tetrahydrofolate + formate + ATP = (6R)-10-formyltetrahydrofolate + ADP + phosphate. The protein operates within one-carbon metabolism; tetrahydrofolate interconversion. The polypeptide is Formate--tetrahydrofolate ligase (Streptococcus pneumoniae (strain JJA)).